Consider the following 689-residue polypeptide: Glycine--tRNA ligase beta subunit (689 aa).

It belongs to the class-II aminoacyl-tRNA synthetase family. In terms of assembly, tetramer of two alpha and two beta subunits.

The protein localises to the cytoplasm. It catalyses the reaction tRNA(Gly) + glycine + ATP = glycyl-tRNA(Gly) + AMP + diphosphate. The sequence is that of Glycine--tRNA ligase beta subunit from Escherichia coli (strain K12 / MC4100 / BW2952).